We begin with the raw amino-acid sequence, 356 residues long: S-adenosylmethionine:tRNA ribosyltransferase-isomerase (356 aa).

It belongs to the QueA family. In terms of assembly, monomer.

The protein localises to the cytoplasm. The enzyme catalyses 7-aminomethyl-7-carbaguanosine(34) in tRNA + S-adenosyl-L-methionine = epoxyqueuosine(34) in tRNA + adenine + L-methionine + 2 H(+). Its pathway is tRNA modification; tRNA-queuosine biosynthesis. Functionally, transfers and isomerizes the ribose moiety from AdoMet to the 7-aminomethyl group of 7-deazaguanine (preQ1-tRNA) to give epoxyqueuosine (oQ-tRNA). This is S-adenosylmethionine:tRNA ribosyltransferase-isomerase from Salmonella arizonae (strain ATCC BAA-731 / CDC346-86 / RSK2980).